A 606-amino-acid polypeptide reads, in one-letter code: NADH-ubiquinone oxidoreductase chain 5 (606 aa).

M1 carries the post-translational modification N-formylmethionine. A run of 15 helical transmembrane segments spans residues 4–24 (FSSL…MMSF), 43–63 (AFIT…ELII), 87–107 (MMFI…SMWY), 117–137 (FFKY…ANNL), 140–160 (LFIG…WWYG), 171–191 (AILY…WFLT), 213–233 (LIGL…HPWL), 241–261 (TPVS…FLLI), 273–293 (IQSI…MCAL), 310–330 (LGLM…LHIC), 366–386 (MPFT…MPFL), 413–433 (LIAT…ALLG), 457–477 (LLIG…PTTI), 482–502 (MPYY…ILAL), and 582–602 (GLIK…MILF).

In terms of assembly, core subunit of respiratory chain NADH dehydrogenase (Complex I) which is composed of 45 different subunits.

The protein localises to the mitochondrion inner membrane. It carries out the reaction a ubiquinone + NADH + 5 H(+)(in) = a ubiquinol + NAD(+) + 4 H(+)(out). In terms of biological role, core subunit of the mitochondrial membrane respiratory chain NADH dehydrogenase (Complex I) which catalyzes electron transfer from NADH through the respiratory chain, using ubiquinone as an electron acceptor. Essential for the catalytic activity and assembly of complex I. This chain is NADH-ubiquinone oxidoreductase chain 5 (MT-ND5), found in Bos taurus (Bovine).